The following is a 112-amino-acid chain: Diuretic hormone class 2 (112 aa).

The signal sequence occupies residues 1–24; sequence MVRATCLLASCVLFALLLIVPASA. A propeptide spanning residues 25–71 is cleaved from the precursor; sequence YPRYPSNYFREEGQYEPEEIMDMLNRLGNLIQMERKMENYKEDITSE. Pro-104 bears the Proline amide mark. Positions 108–112 are excised as a propeptide; it reads RRDAH.

In terms of tissue distribution, expressed in corpora cardiaca (CC), corpora allata (CA), antennal lobe (AL) and gnathal ganglion (GNG) (at protein level). Expression in CC, CA and AL detected in most animals, expression in GNG in few animals (at protein level).

It localises to the secreted. Regulation of fluid secretion. Stimulates Malpighian tubule fluid secretion. The chain is Diuretic hormone class 2 from Agrotis ipsilon (Black cutworm moth).